A 251-amino-acid polypeptide reads, in one-letter code: Fibroblast growth factor 23 (251 aa).

An N-terminal signal peptide occupies residues 1–24 (MLGTCLRLLVGVLCTVCSLGTARA). C95 and C113 are joined by a disulfide. Residues T171 and T178 are each glycosylated (O-linked (GalNAc) threonine). Residues 175–251 (RRHTRSAEDP…DRCRPFPRFV (77 aa)) are disordered. Basic and acidic residues predominate over residues 179–189 (RSAEDPPERDP). Position 180 is a phosphoserine; by FAM20C (S180).

This sequence belongs to the heparin-binding growth factors family. Interacts with FGFR1. Interacts with FGFR2, FGFR3 and FGFR4. Affinity between fibroblast growth factors (FGFs) and their receptors is increased by KL and heparan sulfate glycosaminoglycans that function as coreceptors. Post-translationally, following secretion this protein is inactivated by cleavage into a N-terminal fragment and a C-terminal fragment. The processing is effected by proprotein convertases. In terms of processing, O-glycosylated at Thr-171 and Thr-178 by GALNT3 and glycosylation of Thr-178 requires previous glycosylation at Thr171. Glycosylation is necessary for secretion; it blocks processing by proprotein convertases when the O-glycan is alpha 2,6-sialylated. Competition between proprotein convertase cleavage and block of cleavage by O-glycosylation determines the level of secreted active FGF23. Phosphorylation at Ser-180 mediated by FAM20C slows down glycosylation at Thr-178 notably. Mainly expressed in the brain and thymus at low levels. In brain; preferentially expressed in the ventrolateral thalamic nucleus.

The protein resides in the secreted. Functionally, regulator of phosphate homeostasis. Inhibits renal tubular phosphate transport by reducing SLC34A1 levels. Acts directly on the parathyroid to decrease PTH secretion. Regulator of vitamin-D metabolism. Negatively regulates osteoblasts differentiation and matrix mineralization. Up-regulates EGR1 expression in the presence of KL. The polypeptide is Fibroblast growth factor 23 (Fgf23) (Mus musculus (Mouse)).